Consider the following 338-residue polypeptide: Triplex capsid protein 1 (338 aa).

Belongs to the herpesviridae TRX1 protein family. Interacts with TRX2, MCP and capsid vertex component 2/CVC2.

Its subcellular location is the virion. It localises to the host nucleus. In terms of biological role, structural component of the T=16 icosahedral capsid. The capsid is composed of pentamers and hexamers of major capsid protein/MCP, which are linked together by heterotrimers called triplexes. These triplexes are formed by a single molecule of triplex protein 1/TRX1 and two copies of triplex protein 2/TRX2. Additionally, TRX1 is required for efficient transport of TRX2 to the nucleus, which is the site of capsid assembly. The chain is Triplex capsid protein 1 from Equine herpesvirus 2 (strain 86/87) (EHV-2).